Reading from the N-terminus, the 174-residue chain is Adenylate kinase (174 aa).

The tract at residues 12–41 (STGDMLRAAIKAGTPLGLEAKKIIDEGGLV) is NMP. AMP contacts are provided by residues T13, R18, 39–41 (GLV), 67–70 (GFPR), and Q74. An LID region spans residues 104–141 (GRRVHLASGRTYHIAYNPPKVEGKDDVTGEDLIQRDDD). Residues R105 and 114–115 (TY) each bind ATP. Positions 138 and 149 each coordinate AMP.

This sequence belongs to the adenylate kinase family. In terms of assembly, monomer.

It localises to the cytoplasm. The enzyme catalyses AMP + ATP = 2 ADP. The protein operates within purine metabolism; AMP biosynthesis via salvage pathway; AMP from ADP: step 1/1. Functionally, catalyzes the reversible transfer of the terminal phosphate group between ATP and AMP. Plays an important role in cellular energy homeostasis and in adenine nucleotide metabolism. This chain is Adenylate kinase, found in Neisseria animalis.